The primary structure comprises 71 residues: Small ribosomal subunit protein eS17 (71 aa).

It belongs to the eukaryotic ribosomal protein eS17 family.

In Pyrobaculum islandicum (strain DSM 4184 / JCM 9189 / GEO3), this protein is Small ribosomal subunit protein eS17.